The sequence spans 156 residues: MGRFIFVSLGLLVLAFSLSGIGADQHCPSGWFSHNVSCYKLINDWKTWDEAQRFCMDEQENGQLASINDVGESVKLSDEFSKTWSIIDVWIGLRLSKRKSIWEWIDGSNVTQTRWEEGEPNNFLKKEFCVVLTSRSRYLKWNDKDCNRRHRFLCKF.

Positions 1–23 (MGRFIFVSLGLLVLAFSLSGIGA) are cleaved as a signal peptide. 3 cysteine pairs are disulfide-bonded: cysteine 27-cysteine 38, cysteine 55-cysteine 154, and cysteine 129-cysteine 146. The C-type lectin domain occupies 34 to 155 (HNVSCYKLIN…CNRRHRFLCK (122 aa)). Asparagine 35 and asparagine 109 each carry an N-linked (GlcNAc...) asparagine glycan. A Mannose-binding motif is present at residues 119–121 (EPN). Ca(2+) contacts are provided by glutamate 127, asparagine 142, and aspartate 143.

It belongs to the true venom lectin family. Expressed by the venom gland.

The protein localises to the secreted. Mannose-binding lectin which recognizes specific carbohydrate structures and agglutinates a variety of animal cells by binding to cell-surface glycoproteins and glycolipids. May be a calcium-dependent lectin. The sequence is that of C-type lectin lectoxin-Phi2 from Philodryas olfersii (Green snake).